We begin with the raw amino-acid sequence, 519 residues long: Asteroid homolog 1 (519 aa).

It belongs to the asteroid family.

It is found in the cytoplasm. The protein resides in the mitochondrion. The sequence is that of Asteroid homolog 1 (ast1) from Schizosaccharomyces pombe (strain 972 / ATCC 24843) (Fission yeast).